Consider the following 212-residue polypeptide: ER lumen protein-retaining receptor 1 (212 aa).

The Lumenal portion of the chain corresponds to 1–4; that stretch reads MNIF. The chain crosses the membrane as a helical span at residues 5–24; it reads RFLGDISHLSAILILLLKIW. The Cytoplasmic segment spans residues 25-32; that stretch reads KSRSCAGI. Residues 33–52 form a helical membrane-spanning segment; sequence SGKSQLLFAIVFTTRYLDLF. The interval 47-48 is interaction with the K-D-E-L motif on target proteins; that stretch reads RY. Residues 53–58 lie on the Lumenal side of the membrane; it reads TNFISL. A helical membrane pass occupies residues 59–79; it reads YNTSMKMVYVASSYATIWMIY. At 80–92 the chain is on the cytoplasmic side; it reads SKFKATYDGNHDT. A helical membrane pass occupies residues 93–110; sequence FRVEFLIVPTAILAFLVN. The Lumenal segment spans residues 111 to 116; that stretch reads HDFTPL. Residues 117 to 135 form a helical membrane-spanning segment; that stretch reads EILWTFSIYLESVAILPQL. The Cytoplasmic portion of the chain corresponds to 136-149; the sequence is FMVSKTGEAETITS. Residues 150–168 traverse the membrane as a helical segment; the sequence is HYLFALGIYRALYLFNWIW. The interaction with the K-D-E-L motif on target proteins stretch occupies residues 159 to 169; the sequence is RALYLFNWIWR. At 169–178 the chain is on the lumenal side; sequence RYQFEGFFDL. The chain crosses the membrane as a helical span at residues 179-199; that stretch reads IAIVAGLVQTVLYCDFFYLYI. Residues 200–212 are Cytoplasmic-facing; sequence TKVLKGKKLSLPA. An important for recycling of cargo proteins with the sequence motif K-D-E-L from the Golgi to the endoplasmic reticulum region spans residues 204–207; the sequence is KGKK.

Belongs to the ERD2 family.

It localises to the golgi apparatus membrane. The protein resides in the cytoplasmic vesicle. Its subcellular location is the COPI-coated vesicle membrane. The protein localises to the endoplasmic reticulum membrane. It is found in the endoplasmic reticulum-Golgi intermediate compartment membrane. Functionally, receptor for the C-terminal sequence motif K-D-E-L that is present on endoplasmic reticulum resident proteins and that mediates their recycling from the Golgi back to the endoplasmic reticulum. This is ER lumen protein-retaining receptor 1 (kdelr1) from Xenopus tropicalis (Western clawed frog).